A 46-amino-acid polypeptide reads, in one-letter code: GTP cyclohydrolase 1 (46 aa).

Cysteine 7 contacts Zn(2+).

Belongs to the GTP cyclohydrolase I family. Homomer.

The catalysed reaction is GTP + H2O = 7,8-dihydroneopterin 3'-triphosphate + formate + H(+). The protein operates within cofactor biosynthesis; 7,8-dihydroneopterin triphosphate biosynthesis; 7,8-dihydroneopterin triphosphate from GTP: step 1/1. The protein is GTP cyclohydrolase 1 (folE) of Bacillus pumilus (Bacillus mesentericus).